Consider the following 557-residue polypeptide: T-complex protein 1 subunit theta-like 2 (557 aa).

Disordered regions lie at residues 1-33 (MDST…EPHL) and 531-557 (EIWN…GLNN).

The protein belongs to the TCP-1 chaperonin family.

It localises to the cytoplasm. Possible molecular chaperone; assists the folding of proteins upon ATP hydrolysis. This Homo sapiens (Human) protein is T-complex protein 1 subunit theta-like 2 (CCT8L2).